The primary structure comprises 224 residues: uncharacterized protein (224 aa).

This is an uncharacterized protein from Bacillus anthracis.